Reading from the N-terminus, the 195-residue chain is Thymidine kinase (195 aa).

ATP-binding positions include 15–22 and 88–91; these read GSMFSGKS and DEVQ. Glutamate 89 acts as the Proton acceptor in catalysis. Phenylalanine 120 is a binding site for substrate. Residues cysteine 145 and cysteine 148 each contribute to the Zn(2+) site. Substrate is bound by residues 170 to 174 and tyrosine 179; that span reads IILVG. Positions 183 and 186 each coordinate Zn(2+).

This sequence belongs to the thymidine kinase family. Homotetramer.

Its subcellular location is the cytoplasm. It catalyses the reaction thymidine + ATP = dTMP + ADP + H(+). In Bacillus cereus (strain ATCC 14579 / DSM 31 / CCUG 7414 / JCM 2152 / NBRC 15305 / NCIMB 9373 / NCTC 2599 / NRRL B-3711), this protein is Thymidine kinase.